The chain runs to 31 residues: Cytochrome b6-f complex subunit 6 (31 aa).

Residues 4 to 24 (ITSYFGFLLAALTLTLALFIG) form a helical membrane-spanning segment.

This sequence belongs to the PetL family. In terms of assembly, the 4 large subunits of the cytochrome b6-f complex are cytochrome b6, subunit IV (17 kDa polypeptide, PetD), cytochrome f and the Rieske protein, while the 4 small subunits are PetG, PetL, PetM and PetN. The complex functions as a dimer.

Its subcellular location is the plastid. The protein localises to the chloroplast thylakoid membrane. Component of the cytochrome b6-f complex, which mediates electron transfer between photosystem II (PSII) and photosystem I (PSI), cyclic electron flow around PSI, and state transitions. PetL is important for photoautotrophic growth as well as for electron transfer efficiency and stability of the cytochrome b6-f complex. This is Cytochrome b6-f complex subunit 6 from Oryza sativa subsp. japonica (Rice).